A 408-amino-acid chain; its full sequence is Argininosuccinate synthase (408 aa).

ATP contacts are provided by residues 10-18 (AYSGGLDTS) and Ala37. L-citrulline contacts are provided by Tyr90 and Ser95. Gly120 lines the ATP pocket. Residues Thr122, Asn126, and Asp127 each coordinate L-aspartate. Residue Asn126 participates in L-citrulline binding. Residues Arg130, Ser182, Ser191, Glu267, and Tyr279 each contribute to the L-citrulline site.

Belongs to the argininosuccinate synthase family. Type 1 subfamily. As to quaternary structure, homotetramer.

The protein localises to the cytoplasm. It catalyses the reaction L-citrulline + L-aspartate + ATP = 2-(N(omega)-L-arginino)succinate + AMP + diphosphate + H(+). It functions in the pathway amino-acid biosynthesis; L-arginine biosynthesis; L-arginine from L-ornithine and carbamoyl phosphate: step 2/3. This chain is Argininosuccinate synthase, found in Paraburkholderia xenovorans (strain LB400).